The chain runs to 332 residues: Protein pelota homolog (332 aa).

Belongs to the eukaryotic release factor 1 family. Pelota subfamily. In terms of assembly, monomer. It depends on a divalent metal cation as a cofactor.

It localises to the cytoplasm. Its function is as follows. May function in recognizing stalled ribosomes, interact with stem-loop structures in stalled mRNA molecules, and effect endonucleolytic cleavage of the mRNA. May play a role in the release non-functional ribosomes and degradation of damaged mRNAs. Has endoribonuclease activity. This Pyrobaculum calidifontis (strain DSM 21063 / JCM 11548 / VA1) protein is Protein pelota homolog.